We begin with the raw amino-acid sequence, 564 residues long: Copine-8 (564 aa).

C2 domains are found at residues 1–133 (MDSR…RLEK) and 142–265 (KCGT…FNVY). Ca(2+)-binding residues include aspartate 39, aspartate 45, aspartate 99, aspartate 101, serine 104, lysine 109, aspartate 111, aspartate 173, aspartate 179, aspartate 235, aspartate 237, and aspartate 243. Serine 260 is modified (phosphoserine). The VWFA domain maps to 309-510 (NFTVAIDFTA…VQFVPFRDYI (202 aa)).

This sequence belongs to the copine family. Ca(2+) serves as cofactor.

Probable calcium-dependent phospholipid-binding protein that may play a role in calcium-mediated intracellular processes. In Homo sapiens (Human), this protein is Copine-8.